The primary structure comprises 645 residues: DNA mismatch repair protein MutL (645 aa).

Disordered regions lie at residues Arg353–Gln381 and Gln395–Gly420.

The protein belongs to the DNA mismatch repair MutL/HexB family.

This protein is involved in the repair of mismatches in DNA. It is required for dam-dependent methyl-directed DNA mismatch repair. May act as a 'molecular matchmaker', a protein that promotes the formation of a stable complex between two or more DNA-binding proteins in an ATP-dependent manner without itself being part of a final effector complex. The sequence is that of DNA mismatch repair protein MutL from Pseudomonas syringae pv. tomato (strain ATCC BAA-871 / DC3000).